Consider the following 474-residue polypeptide: Adenylyl cyclase-associated protein 1 (474 aa).

At A2 the chain carries N-acetylalanine. Y31 is subject to Phosphotyrosine. Phosphoserine is present on S34. At K80 the chain carries N6-acetyllysine. Disordered regions lie at residues 215-253 and 277-316; these read ELSG…SASR and MKTH…ATKK. A compositionally biased stretch (low complexity) spans 217–227; that stretch reads SGLPSGPSVGS. Residues 228–241 show a composition bias toward pro residues; that stretch reads GPPPPPPGPPPPPI. K286 carries the post-translational modification N6-methyllysine. Phosphoserine occurs at positions 289, 294, and 300. The span at 299–311 shows a compositional bias: pro residues; that stretch reads FSAPKPQTSPSPK. T306 is subject to Phosphothreonine. Phosphoserine occurs at positions 307 and 309. Positions 312-452 constitute a C-CAP/cofactor C-like domain; the sequence is PATKKEPALL…EGGDFNEFPV (141 aa). Residue K347 forms a Glycyl lysine isopeptide (Lys-Gly) (interchain with G-Cter in SUMO1) linkage.

It belongs to the CAP family. In terms of assembly, homodimer. Binds actin monomers. Ubiquitous.

Its subcellular location is the cell membrane. Functionally, directly regulates filament dynamics and has been implicated in a number of complex developmental and morphological processes, including mRNA localization and the establishment of cell polarity. This Mus musculus (Mouse) protein is Adenylyl cyclase-associated protein 1 (Cap1).